Here is a 577-residue protein sequence, read N- to C-terminus: Probable L-gulonolactone oxidase 4 (577 aa).

Positions 1–17 are cleaved as a signal peptide; sequence MSFWLSLIFCFFTFASS. Positions 46-228 constitute an FAD-binding PCMH-type domain; that stretch reads SICKAAKVEY…SQVTFELQPM (183 aa).

The protein belongs to the oxygen-dependent FAD-linked oxidoreductase family. FAD is required as a cofactor.

The catalysed reaction is L-gulono-1,4-lactone + O2 = L-ascorbate + H2O2 + H(+). It functions in the pathway cofactor biosynthesis; L-ascorbate biosynthesis. May be involved in the biosynthesis of ascorbic acid. The sequence is that of Probable L-gulonolactone oxidase 4 from Arabidopsis thaliana (Mouse-ear cress).